The primary structure comprises 310 residues: tRNA uridine(34) hydroxylase (310 aa).

Positions 127–225 (KNQNTIVIDT…YLDDIPKEKN (99 aa)) constitute a Rhodanese domain. Cys185 functions as the Cysteine persulfide intermediate in the catalytic mechanism.

It belongs to the TrhO family.

The enzyme catalyses uridine(34) in tRNA + AH2 + O2 = 5-hydroxyuridine(34) in tRNA + A + H2O. Its function is as follows. Catalyzes oxygen-dependent 5-hydroxyuridine (ho5U) modification at position 34 in tRNAs. This is tRNA uridine(34) hydroxylase from Prochlorococcus marinus (strain MIT 9312).